The sequence spans 214 residues: Octanoyltransferase (214 aa).

Residues 34-214 (GLQKELVWLL…KFNEIFSSFN (181 aa)) enclose the BPL/LPL catalytic domain. Substrate-binding positions include 73–80 (RGGKYTYH), 145–147 (AFG), and 158–160 (GVS). Catalysis depends on cysteine 176, which acts as the Acyl-thioester intermediate.

Belongs to the LipB family.

The protein localises to the cytoplasm. It carries out the reaction octanoyl-[ACP] + L-lysyl-[protein] = N(6)-octanoyl-L-lysyl-[protein] + holo-[ACP] + H(+). Its pathway is protein modification; protein lipoylation via endogenous pathway; protein N(6)-(lipoyl)lysine from octanoyl-[acyl-carrier-protein]: step 1/2. Functionally, catalyzes the transfer of endogenously produced octanoic acid from octanoyl-acyl-carrier-protein onto the lipoyl domains of lipoate-dependent enzymes. Lipoyl-ACP can also act as a substrate although octanoyl-ACP is likely to be the physiological substrate. The polypeptide is Octanoyltransferase (Ehrlichia canis (strain Jake)).